The following is a 127-amino-acid chain: Fumarate reductase subunit C (127 aa).

The next 3 membrane-spanning stretches (helical) occupy residues 30–50 (ATVL…GSLV), 67–87 (IVVA…QTFF), and 107–127 (IIVL…LIVM).

The protein belongs to the FrdC family. In terms of assembly, part of an enzyme complex containing four subunits: a flavoprotein (FrdA), an iron-sulfur protein (FrdB), and two hydrophobic anchor proteins (FrdC and FrdD).

It is found in the cell inner membrane. Functionally, anchors the catalytic components of the fumarate reductase complex to the cell membrane, binds quinones. The polypeptide is Fumarate reductase subunit C (Vibrio campbellii (strain ATCC BAA-1116)).